The chain runs to 182 residues: Nudix hydrolase 17, mitochondrial (182 aa).

The N-terminal 26 residues, Met1 to Gln26, are a transit peptide targeting the mitochondrion. One can recognise a Nudix hydrolase domain in the interval Val27–Val158. A Nudix box motif is present at residues Gly65–Gly86. Mg(2+) is bound by residues Glu80 and Glu84.

Belongs to the Nudix hydrolase family. Mg(2+) is required as a cofactor. The cofactor is Mn(2+). Expressed in roots, leaves, stems and inflorescences.

The protein resides in the mitochondrion. Its function is as follows. Probably mediates the hydrolysis of some nucleoside diphosphate derivatives. In Arabidopsis thaliana (Mouse-ear cress), this protein is Nudix hydrolase 17, mitochondrial (NUDT17).